Consider the following 491-residue polypeptide: Cytochrome P450 2B2 (491 aa).

Phosphoserine; by PKA is present on serine 128. Cysteine 436 lines the heme pocket.

It belongs to the cytochrome P450 family. The cofactor is heme. Post-translationally, phosphorylation is accompanied by a decrease in enzyme activity.

Its subcellular location is the endoplasmic reticulum membrane. It is found in the microsome membrane. It carries out the reaction an organic molecule + reduced [NADPH--hemoprotein reductase] + O2 = an alcohol + oxidized [NADPH--hemoprotein reductase] + H2O + H(+). In terms of biological role, cytochromes P450 are a group of heme-thiolate monooxygenases. In liver microsomes, this enzyme is involved in an NADPH-dependent electron transport pathway. It oxidizes a variety of structurally unrelated compounds, including steroids, fatty acids, and xenobiotics. The sequence is that of Cytochrome P450 2B2 (Cyp2b2) from Rattus norvegicus (Rat).